The sequence spans 2223 residues: MKGHQFKFWIFELREIKNSHYFSDSWTQFNSVGSFIHIFFHQERFIKLFDPRIWSILLSPNSRGSTSNRYFTIKGVILFVVVFLLYRINNRNMVERKNLYLIGLLPIPMNSIGPRNDTLEKPFWSSNINRLIVSLLYLPKGKNISASCFLDPKESTSTWFLPITKKCIMPESNRGSQWWRNWIGKKRDSSCKISNETVAGIEISFKEKDIKYLEFLFVYYMDDPISKDHDWELFDRLSLRRRRNIINLNSGQLFEILVKHWICYLMSAFREKRPIEVEGFFKQQGAGSTIQSNDIEHVSHLFSRNKWAISLQNCAQFHMWQFHQDLVVSWGKNPYESDLLRNVSRENWIWLDNVWLVNNFNKVRNVSSNSQYDSTRSSFVQVTDSSQLKGSSDQSRDRWDSISNADSEYHTLINKREIQQLKERSILRDPSFLQTEEIEELLENPTRSIRSFFSGRCSELHLGSNPTEKPTRDPKLLKKHLVVSFAPSRRSENKEMINIFKIITYLQNSVSIHPISPDPGCDMVPKDEPDMDSSDKISFLNKNSFFYLFNLFHDRNSGGYTLHHDFESEERFQEMADLFTLSITKPDLVYHKGFAFSIDSCGLDQKQFLNEVFNSRDESKKKSLLILPPIFYEENAFFYRRIQKKWVRISCGNYLEDRKQKRVVFASNNKMEAVNKNQYILIRNLIQIQYSTYGYIRNVLNRLFLMNRSDRSFEYGIKRDQIGNDTLNHRTIRKYTINQHLSNLKKSQKKRFDPLIFLSRTERFMNQDPDAYRYKWFNGSKNFQEHLVSEQRSRFQVVFGRLRINKYSIDWSEVIDKKDLSKSLRFFLSKSLLFLSKLLLFVSNSLPFFFVSFGNIPIHRSEIHISELKGPNDQLYNPLLESIGLQIVHLKKLKAFLLNDHDTFQKSKLLINGRTISPFLFNKIPKWMIDSFDTRNNHRNGKTDSYFSMISHDQNNWLNPVKPFHRSSLISSFYKANRLRFLNNPHHFCFYCNKRFPFYMEKARINNYDFTYRQFLDILFIRNKIFALCVGKKKHAFLERDTISPIESQVSNIFIPNDFTIRSDLFVRRTIDSITDISGTPLTEGQIVHFERTFYQPLSDMNLSDSERKNLHQYLNFNSNMGLIYTPCSDKYLPSEKRKKRSLCLKKCVEKGQMYRTFQRDSAFSTLSKWNLFQTYMPWFLTSTGYKYLNFLFFDTFSDLLPILSSSQKFVSIFHDIMHGSYISWRILQKKVCLPQWNLISEISNKCLHNLLLSEEMIHRNNESPLIWTHLGSPNVREFFYSILFLLLVAGYLVRTHLLFVFRASSELQTEFEEVKSLMTPSYMIELRKLLDRYPTSESNFFWLKNLFLVALEQLGDSLEEIWGSASGGNMPLGGGPAYGVKSIRSNKKDFNINLIDLISIIPNPINRITFSRNTRHLSHTSKEIYSLIRKRKRVNGDWIEDKIESWVASSDSIDEEEREFLVQLSTLTTEKRIDQILLSLTHSDRLLKNDSGYQMIEQPGAIYLRYLVDIHKKYLMNYEFNTSCLAERRVFLAHYQTITYSQTSCGANRFHFPSHGKPFSLRLALSLSRGILVIGSIGTGRSYLVKYLATNSYVPFITVFLNKFLDNKLKGFLIDASDDIDIDVSDDIDVSDDIDRDLDTELELLTMMNALTMDMMPEIGQFYITLQFELAKAMSPCIIWIPNIHDLDVNESNYLSLGLLVNYLSRDCERWSTRNILVIASTHIPQKVDPALIAPNKLNTCIKIRRLLIPQQRKHFFTLSYTRGFHLEKKMFHTNGFGSITMGSNVRDLVALNNEVLSISITQKKSIIDTNTIRSALHRQTWDFRSQVRSVQDHGIFFYQIGRAVAQNVLLSNCPIDPISIYMKKKSCNEGDSSLYKWYFELGTSMKKLTILLYLLSCSAGSVAQDLWSLPGPDGKKGITSYGLVENDSNLVHGLLKVEGALVGSSRTEKDCSQFDNDRVTLFLRPELRNPLDMMQNGSCSILDHRFLYEKDKSELEKGEGALDPQQIEEDLFNPIVWAPRIWTPWSFLFYCIERPNSLGFPYWAGSLRGKRIIYDEEDELQENDSEFLQSGTMQYQTRDRSSKEQGFFRISQFIWDPADPLFFLSKDQPFVSVFSHREFFADEEMPKGLLTTQKSTPTSIYKRWFIKNTQEKHFELLINRQRWLRTNSSLSNGSFRSNTLSESYQYLSNLFLSNGTLLDQMTKTLLRKRWLFPDEMKIGFM.

An ATP-binding site is contributed by 1576-1583; it reads GSIGTGRS.

It belongs to the Ycf2 family.

The protein resides in the plastid. It is found in the chloroplast stroma. Functionally, probable ATPase of unknown function. Its presence in a non-photosynthetic plant (Epifagus virginiana) and experiments in tobacco indicate that it has an essential function which is probably not related to photosynthesis. This chain is Protein Ycf2, found in Silene latifolia (White campion).